The chain runs to 423 residues: Innexin eat-5 (423 aa).

Transmembrane regions (helical) follow at residues 25–41 (YYYSTLIIMGMSLTITA), 102–122 (PFIMAIEAAFFYLPVIFWSML), 277–297 (IFLFLYIWFLLVFFVTLFDSI), and 341–361 (HSILLSEFCLHKFTPDIIILL).

Belongs to the pannexin family. In terms of assembly, heterooligomer of eat-5 and another innexin. As to expression, expressed in pharyngeal muscles.

It is found in the cell membrane. The protein resides in the cell junction. Its subcellular location is the gap junction. In terms of biological role, structural component of the gap junctions. Required for synchronized pharyngeal muscle contractions. This is Innexin eat-5 (eat-5) from Caenorhabditis elegans.